A 539-amino-acid polypeptide reads, in one-letter code: CTP synthase (539 aa).

The tract at residues 1–268 (MSFKSIFLTG…SDFLLNKLGF (268 aa)) is amidoligase domain. Serine 14 serves as a coordination point for CTP. Serine 14 contributes to the UTP binding site. Position 15 to 20 (15 to 20 (SLGKGL)) interacts with ATP. Tyrosine 55 lines the L-glutamine pocket. An ATP-binding site is contributed by aspartate 72. Aspartate 72 and glutamate 142 together coordinate Mg(2+). CTP-binding positions include 149 to 151 (DIE), 188 to 193 (KTKPTQ), and lysine 224. UTP-binding positions include 188 to 193 (KTKPTQ) and lysine 224. Positions 294–532 (RIGLVGKYLE…IRAAKAYSLE (239 aa)) constitute a Glutamine amidotransferase type-1 domain. Residue glycine 353 participates in L-glutamine binding. The active-site Nucleophile; for glutamine hydrolysis is the cysteine 380. L-glutamine is bound by residues 381 to 384 (LGMQ), glutamate 404, and arginine 460. Active-site residues include histidine 505 and glutamate 507.

Belongs to the CTP synthase family. As to quaternary structure, homotetramer.

It catalyses the reaction UTP + L-glutamine + ATP + H2O = CTP + L-glutamate + ADP + phosphate + 2 H(+). It carries out the reaction L-glutamine + H2O = L-glutamate + NH4(+). The catalysed reaction is UTP + NH4(+) + ATP = CTP + ADP + phosphate + 2 H(+). It functions in the pathway pyrimidine metabolism; CTP biosynthesis via de novo pathway; CTP from UDP: step 2/2. Its activity is regulated as follows. Allosterically activated by GTP, when glutamine is the substrate; GTP has no effect on the reaction when ammonia is the substrate. The allosteric effector GTP functions by stabilizing the protein conformation that binds the tetrahedral intermediate(s) formed during glutamine hydrolysis. Inhibited by the product CTP, via allosteric rather than competitive inhibition. Functionally, catalyzes the ATP-dependent amination of UTP to CTP with either L-glutamine or ammonia as the source of nitrogen. Regulates intracellular CTP levels through interactions with the four ribonucleotide triphosphates. This Chlamydia trachomatis serovar L2 (strain ATCC VR-902B / DSM 19102 / 434/Bu) protein is CTP synthase.